The following is a 225-amino-acid chain: tRNA (guanine-N(1)-)-methyltransferase (225 aa).

Residues glycine 112 and 132 to 137 (IGDYVL) each bind S-adenosyl-L-methionine.

This sequence belongs to the RNA methyltransferase TrmD family. In terms of assembly, homodimer.

It is found in the cytoplasm. The catalysed reaction is guanosine(37) in tRNA + S-adenosyl-L-methionine = N(1)-methylguanosine(37) in tRNA + S-adenosyl-L-homocysteine + H(+). Its function is as follows. Specifically methylates guanosine-37 in various tRNAs. The protein is tRNA (guanine-N(1)-)-methyltransferase of Bacteroides fragilis (strain ATCC 25285 / DSM 2151 / CCUG 4856 / JCM 11019 / LMG 10263 / NCTC 9343 / Onslow / VPI 2553 / EN-2).